The sequence spans 298 residues: MTNAHYIGRFAPSPSGELHFGSLIAALGSYLRARSQHGIWRVRIEDIDPPREVPGAAETILRQLEHYGLHWDGDILWQSQRHDAYRDALAWLRQQNLSYYCTCPRARIQRIGGVYDGHCRTLQHGPENAAVRIKQFSPVMQFHDVLRGDIQADPLLAREDFIIHRRDGLFAYNLAVVVDDHFQGVTEIVRGADLIEPTVRQISLYQQFGWRAPDYIHLPLALNEQGAKLSKQNHAPALPEGDPRPVLIAALRFLGQNATAQWQDMHTDELLQYAVDNWTLTTVPESASVNPAFSNASC.

Residues 9 to 13 (RFAPS) and Glu-45 each bind L-glutamate. The short motif at 12–22 (PSPSGELHFGS) is the 'HIGH' region element. Residues Cys-101, Cys-103, Tyr-115, and Cys-119 each contribute to the Zn(2+) site. Positions 172 and 190 each coordinate L-glutamate. Residues 228 to 232 (KLSKQ) carry the 'KMSKS' region motif. Position 231 (Lys-231) interacts with ATP.

This sequence belongs to the class-I aminoacyl-tRNA synthetase family. GluQ subfamily. Requires Zn(2+) as cofactor.

In terms of biological role, catalyzes the tRNA-independent activation of glutamate in presence of ATP and the subsequent transfer of glutamate onto a tRNA(Asp). Glutamate is transferred on the 2-amino-5-(4,5-dihydroxy-2-cyclopenten-1-yl) moiety of the queuosine in the wobble position of the QUC anticodon. This chain is Glutamyl-Q tRNA(Asp) synthetase, found in Citrobacter koseri (strain ATCC BAA-895 / CDC 4225-83 / SGSC4696).